The sequence spans 544 residues: Probable protein kinase UbiB (544 aa).

The Protein kinase domain occupies 123–505; it reads EFDEQALASA…GRQKSHNVRS (383 aa). ATP-binding positions include 129-137 and Lys156; that span reads LASASIAQV. Residue Asp291 is the Proton acceptor of the active site. A helical transmembrane segment spans residues 522–540; that stretch reads LPLWLSCGTLVTVLLVLLL.

This sequence belongs to the ABC1 family. UbiB subfamily.

It is found in the cell inner membrane. Its pathway is cofactor biosynthesis; ubiquinone biosynthesis [regulation]. In terms of biological role, is probably a protein kinase regulator of UbiI activity which is involved in aerobic coenzyme Q (ubiquinone) biosynthesis. This Actinobacillus pleuropneumoniae serotype 5b (strain L20) protein is Probable protein kinase UbiB.